Here is a 172-residue protein sequence, read N- to C-terminus: Allergen Bos d 2 (172 aa).

The first 16 residues, 1–16, serve as a signal peptide directing secretion; it reads MKAVFLTLLFGLVCTA. Q17 is subject to Pyrrolidone carboxylic acid. 2 cysteine pairs are disulfide-bonded: C60–C64 and C79–C170.

This sequence belongs to the calycin superfamily. Lipocalin family. Found exclusively in skin. Produced in sweat glands and transported to the skin surface.

It localises to the secreted. Probable pheromone carrier. This chain is Allergen Bos d 2, found in Bos taurus (Bovine).